Here is a 472-residue protein sequence, read N- to C-terminus: Ribulose bisphosphate carboxylase large chain (472 aa).

Residues asparagine 115 and threonine 165 each coordinate substrate. Lysine 167 acts as the Proton acceptor in catalysis. Lysine 169 serves as a coordination point for substrate. The Mg(2+) site is built by lysine 193, aspartate 195, and glutamate 196. Lysine 193 carries the post-translational modification N6-carboxylysine. Histidine 286 serves as the catalytic Proton acceptor. Substrate-binding residues include arginine 287, histidine 319, and serine 371.

It belongs to the RuBisCO large chain family. Type I subfamily. In terms of assembly, heterohexadecamer of 8 large chains and 8 small chains. Requires Mg(2+) as cofactor.

It carries out the reaction 2 (2R)-3-phosphoglycerate + 2 H(+) = D-ribulose 1,5-bisphosphate + CO2 + H2O. It catalyses the reaction D-ribulose 1,5-bisphosphate + O2 = 2-phosphoglycolate + (2R)-3-phosphoglycerate + 2 H(+). In terms of biological role, ruBisCO catalyzes two reactions: the carboxylation of D-ribulose 1,5-bisphosphate, the primary event in carbon dioxide fixation, as well as the oxidative fragmentation of the pentose substrate. Both reactions occur simultaneously and in competition at the same active site. The protein is Ribulose bisphosphate carboxylase large chain of Solemya velum gill symbiont.